Consider the following 305-residue polypeptide: Acetyl-coenzyme A carboxylase carboxyl transferase subunit beta (305 aa).

Residues 25 to 293 (LWVQCPACQQ…LPKVESVASL (269 aa)) form the CoA carboxyltransferase N-terminal domain. Zn(2+) is bound by residues cysteine 29, cysteine 32, cysteine 48, and cysteine 51. Residues 29-51 (CPACQQMIFARDLEKNQRVCTHC) form a C4-type zinc finger.

The protein belongs to the AccD/PCCB family. In terms of assembly, acetyl-CoA carboxylase is a heterohexamer composed of biotin carboxyl carrier protein (AccB), biotin carboxylase (AccC) and two subunits each of ACCase subunit alpha (AccA) and ACCase subunit beta (AccD). It depends on Zn(2+) as a cofactor.

It is found in the cytoplasm. The catalysed reaction is N(6)-carboxybiotinyl-L-lysyl-[protein] + acetyl-CoA = N(6)-biotinyl-L-lysyl-[protein] + malonyl-CoA. It participates in lipid metabolism; malonyl-CoA biosynthesis; malonyl-CoA from acetyl-CoA: step 1/1. Component of the acetyl coenzyme A carboxylase (ACC) complex. Biotin carboxylase (BC) catalyzes the carboxylation of biotin on its carrier protein (BCCP) and then the CO(2) group is transferred by the transcarboxylase to acetyl-CoA to form malonyl-CoA. The sequence is that of Acetyl-coenzyme A carboxylase carboxyl transferase subunit beta from Granulibacter bethesdensis (strain ATCC BAA-1260 / CGDNIH1).